The primary structure comprises 601 residues: Elongation factor 4 (601 aa).

The 183-residue stretch at 2–184 (DLIRNFSIIA…EMIARVPPPT (183 aa)) folds into the tr-type G domain. Residues 14-19 (DHGKST) and 131-134 (NKID) each bind GTP.

It belongs to the TRAFAC class translation factor GTPase superfamily. Classic translation factor GTPase family. LepA subfamily.

Its subcellular location is the cell inner membrane. It carries out the reaction GTP + H2O = GDP + phosphate + H(+). Functionally, required for accurate and efficient protein synthesis under certain stress conditions. May act as a fidelity factor of the translation reaction, by catalyzing a one-codon backward translocation of tRNAs on improperly translocated ribosomes. Back-translocation proceeds from a post-translocation (POST) complex to a pre-translocation (PRE) complex, thus giving elongation factor G a second chance to translocate the tRNAs correctly. Binds to ribosomes in a GTP-dependent manner. In Polynucleobacter asymbioticus (strain DSM 18221 / CIP 109841 / QLW-P1DMWA-1) (Polynucleobacter necessarius subsp. asymbioticus), this protein is Elongation factor 4.